The chain runs to 234 residues: MNKGFTFKQFHINIGLCGMPVSTDGVLLGAWANIEQSKNILDIGCGTGLLSLMSAQRNENSHVDAVELMPLAAEVALQNFVQSPWKNRLHLIHQDILHYHPAHLYDAIICNPPYFNNGEQSQKGERSIARHTDSLPFDKLLKCCKALMSSKGRASFILPFIEGNQFIEIAKKHSFHLTKLTKIQTTEKKDVSRLLIELSIFPYIYQETTLIIHSKDGYSNDFIQLTRHFYLNMA.

It belongs to the methyltransferase superfamily. tRNA (adenine-N(6)-)-methyltransferase family.

The protein localises to the cytoplasm. The enzyme catalyses adenosine(37) in tRNA1(Val) + S-adenosyl-L-methionine = N(6)-methyladenosine(37) in tRNA1(Val) + S-adenosyl-L-homocysteine + H(+). In terms of biological role, specifically methylates the adenine in position 37 of tRNA(1)(Val) (anticodon cmo5UAC). This Aliivibrio salmonicida (strain LFI1238) (Vibrio salmonicida (strain LFI1238)) protein is tRNA1(Val) (adenine(37)-N6)-methyltransferase.